A 439-amino-acid polypeptide reads, in one-letter code: Innexin-19 (439 aa).

A run of 4 helical transmembrane segments spans residues 33–53 (PLIL…GTPI), 103–123 (QWVP…CIFW), 199–219 (IVYS…FFIL), and 285–305 (VFAF…CSFI).

This sequence belongs to the pannexin family.

Its subcellular location is the cell membrane. The protein localises to the cell junction. It localises to the gap junction. Its function is as follows. Structural component of the gap junctions that specifically coordinates left-right asymmetry in the developing nervous system. Acts by forming gap junction network linking embryonic neurons and providing electrical coupling between cells, leading to promote or inhibit AWC signaling. The polypeptide is Innexin-19 (inx-19) (Caenorhabditis briggsae).